Here is a 40-residue protein sequence, read N- to C-terminus: Conotoxin Bt14.16 (40 aa).

Positions 1–18 are excised as a propeptide; the sequence is SDGRDAAVIYTESDVIAR. 2 cysteine pairs are disulfide-bonded: C21/C36 and C24/C29.

Belongs to the conotoxin A superfamily. In terms of tissue distribution, expressed by the venom duct.

Its subcellular location is the secreted. Probable neurotoxin with unknown target. Possibly targets ion channels. In Conus betulinus (Beech cone), this protein is Conotoxin Bt14.16.